Consider the following 240-residue polypeptide: Protein RoBo-1 (240 aa).

The first 26 residues, 1-26, serve as a signal peptide directing secretion; the sequence is MSWFLVLKCLLTVCIISHLSVSSTES. Asn-42 carries an N-linked (GlcNAc...) asparagine glycan. 5 disulfide bridges follow: Cys-47-Cys-76, Cys-81-Cys-102, Cys-103-Cys-108, Cys-127-Cys-151, and Cys-144-Cys-171. Asn-153 carries an N-linked (GlcNAc...) asparagine glycan.

It belongs to the CNF-like-inhibitor family. In terms of processing, N-glycosylated. As to expression, expressed abundantly in bone, including the lengthening growth plate where cartilage is remodeled into bone.

It is found in the secreted. In terms of biological role, may play a novel role in the growth or remodeling of bone. The sequence is that of Protein RoBo-1 from Rattus norvegicus (Rat).